The primary structure comprises 54 residues: Movement protein p6 (54 aa).

Residues methionine 1–leucine 10 lie on the Lumenal side of the membrane. A helical transmembrane segment spans residues leucine 11–valine 31. At tyrosine 32 to valine 54 the chain is on the cytoplasmic side.

As to quaternary structure, homodimer; disulfide-linked.

It is found in the host rough endoplasmic reticulum membrane. Transports viral genome to neighboring plant cells directly through plasmosdesmata, without any budding. The movement protein allows efficient cell to cell propagation, by bypassing the host cell wall barrier. Two movement proteins, p6, Hsp70h and three structural proteins, CP, CPm, and P64 are essential for cell-cell movement. Also plays a role in virion formation. Together with CPm and p64, encapsidates the 5'-terminal portion of the viral genome. This is Movement protein p6 from Beet yellows virus (isolate Ukraine) (BYV).